We begin with the raw amino-acid sequence, 66 residues long: MDHSLNSLNNFDFLARSFARMHAEGRPVDILAVTGNMDEEHRTWFCARYAWYCQQMMQARELELEH.

The protein belongs to the GlgS family.

Major determinant of cell surface composition. Negatively regulates motility, adhesion and synthesis of biofilm exopolysaccharides. The chain is Surface composition regulator from Escherichia coli O139:H28 (strain E24377A / ETEC).